We begin with the raw amino-acid sequence, 494 residues long: Aspartyl/glutamyl-tRNA(Asn/Gln) amidotransferase subunit B (494 aa).

It belongs to the GatB/GatE family. GatB subfamily. Heterotrimer of A, B and C subunits.

The enzyme catalyses L-glutamyl-tRNA(Gln) + L-glutamine + ATP + H2O = L-glutaminyl-tRNA(Gln) + L-glutamate + ADP + phosphate + H(+). It carries out the reaction L-aspartyl-tRNA(Asn) + L-glutamine + ATP + H2O = L-asparaginyl-tRNA(Asn) + L-glutamate + ADP + phosphate + 2 H(+). Allows the formation of correctly charged Asn-tRNA(Asn) or Gln-tRNA(Gln) through the transamidation of misacylated Asp-tRNA(Asn) or Glu-tRNA(Gln) in organisms which lack either or both of asparaginyl-tRNA or glutaminyl-tRNA synthetases. The reaction takes place in the presence of glutamine and ATP through an activated phospho-Asp-tRNA(Asn) or phospho-Glu-tRNA(Gln). The sequence is that of Aspartyl/glutamyl-tRNA(Asn/Gln) amidotransferase subunit B from Synechococcus sp. (strain CC9902).